The sequence spans 227 residues: Protein p26 (227 aa).

As to quaternary structure, self-associates.

The protein localises to the host cell junction. It localises to the host plasmodesma. The protein is Protein p26 of Lettuce infectious yellows virus (isolate United States/92) (LIYV).